The sequence spans 276 residues: Acyl-[acyl-carrier-protein]--UDP-N-acetylglucosamine O-acyltransferase (276 aa).

Belongs to the transferase hexapeptide repeat family. LpxA subfamily. Homotrimer.

It is found in the cytoplasm. It carries out the reaction a (3R)-hydroxyacyl-[ACP] + UDP-N-acetyl-alpha-D-glucosamine = a UDP-3-O-[(3R)-3-hydroxyacyl]-N-acetyl-alpha-D-glucosamine + holo-[ACP]. The protein operates within glycolipid biosynthesis; lipid IV(A) biosynthesis; lipid IV(A) from (3R)-3-hydroxytetradecanoyl-[acyl-carrier-protein] and UDP-N-acetyl-alpha-D-glucosamine: step 1/6. Functionally, involved in the biosynthesis of lipid A, a phosphorylated glycolipid that anchors the lipopolysaccharide to the outer membrane of the cell. In Synechocystis sp. (strain ATCC 27184 / PCC 6803 / Kazusa), this protein is Acyl-[acyl-carrier-protein]--UDP-N-acetylglucosamine O-acyltransferase.